The chain runs to 88 residues: RNA-binding protein Hfq (88 aa).

In terms of domain architecture, Sm spans D10 to I70.

The protein belongs to the Hfq family. As to quaternary structure, homohexamer.

In terms of biological role, RNA chaperone that binds small regulatory RNA (sRNAs) and mRNAs to facilitate mRNA translational regulation in response to envelope stress, environmental stress and changes in metabolite concentrations. Also binds with high specificity to tRNAs. The protein is RNA-binding protein Hfq of Fervidobacterium nodosum (strain ATCC 35602 / DSM 5306 / Rt17-B1).